The primary structure comprises 466 residues: 3-isopropylmalate dehydratase large subunit (466 aa).

[4Fe-4S] cluster is bound by residues Cys347, Cys408, and Cys411.

It belongs to the aconitase/IPM isomerase family. LeuC type 1 subfamily. Heterodimer of LeuC and LeuD. The cofactor is [4Fe-4S] cluster.

The enzyme catalyses (2R,3S)-3-isopropylmalate = (2S)-2-isopropylmalate. Its pathway is amino-acid biosynthesis; L-leucine biosynthesis; L-leucine from 3-methyl-2-oxobutanoate: step 2/4. Catalyzes the isomerization between 2-isopropylmalate and 3-isopropylmalate, via the formation of 2-isopropylmaleate. This Herminiimonas arsenicoxydans protein is 3-isopropylmalate dehydratase large subunit.